The primary structure comprises 64 residues: Toxin BmKIT3 (64 aa).

Residues 1 to 61 (DGYIRGSNGC…TWKSESNTCG (61 aa)) form the LCN-type CS-alpha/beta domain. Intrachain disulfides connect cysteine 10-cysteine 60, cysteine 14-cysteine 35, cysteine 21-cysteine 42, and cysteine 25-cysteine 44. Residue cysteine 60 is modified to Cysteine amide.

This sequence belongs to the long (4 C-C) scorpion toxin superfamily. Sodium channel inhibitor family. Beta subfamily. In terms of tissue distribution, expressed by the venom gland.

It localises to the secreted. Functionally, depressant insect beta-toxins cause a transient contraction paralysis followed by a slow flaccid paralysis. They bind voltage-independently at site-4 of sodium channels (Nav) and shift the voltage of activation toward more negative potentials thereby affecting sodium channel activation and promoting spontaneous and repetitive firing. The chain is Toxin BmKIT3 from Olivierus martensii (Manchurian scorpion).